The primary structure comprises 205 residues: Ras-related protein Rab-1A (205 aa).

At serine 2 the chain carries N-acetylserine. Positions 20, 21, 23, 24, 25, 26, 38, and 43 each coordinate GTP. Serine 25 provides a ligand contact to Mg(2+). The Switch 1 signature appears at 34–48 (DTYTESYISTIGVDF). A Mg(2+)-binding site is contributed by threonine 43. Residues lysine 49 and lysine 61 each participate in a glycyl lysine isopeptide (Lys-Gly) (interchain with G-Cter in ubiquitin) cross-link. Aspartate 66 contributes to the Mg(2+) binding site. Positions 66-83 (DTAGQERFRTITSSYYRG) match the Switch 2 motif. 6 residues coordinate GTP: glycine 69, asparagine 124, lysine 125, aspartate 127, alanine 155, and lysine 156. Positions 178-205 (PGATAGGAEKSNVKIQSTPVKQSGGGCC) are disordered. Serine 194 is subject to Phosphoserine. S-geranylgeranyl cysteine attachment occurs at residues cysteine 204 and cysteine 205.

Belongs to the small GTPase superfamily. Rab family. In terms of assembly, may interact with YIPF5. Interacts with C9orf72; the interaction mediates recruitment of RAB1A to the ATG1/ULK1 kinase complex. Interacts with GDI1; this promotes dissociation from membranes. It depends on Mg(2+) as a cofactor. Phosphorylated by CDK1 kinase during mitosis. Post-translationally, ubiquitinated via 'Lys-11'-linked ubiquitination on Lys-49 and Lys-61; impairing the recruitment of guanosine diphosphate (GDP) dissociation inhibitor 1/GDI1.

It is found in the golgi apparatus. The protein localises to the endoplasmic reticulum. The protein resides in the early endosome. Its subcellular location is the cytoplasm. It localises to the cytosol. It is found in the membrane. The protein localises to the melanosome. The catalysed reaction is GTP + H2O = GDP + phosphate + H(+). Its activity is regulated as follows. Regulated by guanine nucleotide exchange factors (GEFs) which promote the exchange of bound GDP for free GTP. Regulated by GTPase activating proteins (GAPs) which increase the GTP hydrolysis activity. Inhibited by GDP dissociation inhibitors (GDIs). Its function is as follows. The small GTPases Rab are key regulators of intracellular membrane trafficking, from the formation of transport vesicles to their fusion with membranes. Rabs cycle between an inactive GDP-bound form and an active GTP-bound form that is able to recruit to membranes different sets of downstream effectors directly responsible for vesicle formation, movement, tethering and fusion. RAB1A regulates vesicular protein transport from the endoplasmic reticulum (ER) to the Golgi compartment and on to the cell surface, and plays a role in IL-8 and growth hormone secretion. Required to modulate the compacted morphology of the Golgi. Regulates the level of CASR present at the cell membrane. Plays a role in cell adhesion and cell migration, via its role in protein trafficking. Plays a role in autophagosome assembly and cellular defense reactions against pathogenic bacteria. Plays a role in microtubule-dependent protein transport by early endosomes and in anterograde melanosome transport. The polypeptide is Ras-related protein Rab-1A (RAB1A) (Canis lupus familiaris (Dog)).